Here is a 164-residue protein sequence, read N- to C-terminus: 17.8 kDa heat shock protein (164 aa).

One can recognise a sHSP domain in the interval 20-154 (VVAGEARPPM…HAGNGKAAGD (135 aa)). The tract at residues 68–93 (GEHEDANNAAKAGKASGEEEEENDGV) is disordered.

This sequence belongs to the small heat shock protein (HSP20) family. May form oligomeric structures.

The protein localises to the cytoplasm. This chain is 17.8 kDa heat shock protein (HSP17.8), found in Oryza sativa subsp. japonica (Rice).